The following is a 139-amino-acid chain: Flagellar assembly factor FliW 2 (139 aa).

It belongs to the FliW family. In terms of assembly, interacts with translational regulator CsrA and flagellin(s).

It is found in the cytoplasm. Functionally, acts as an anti-CsrA protein, binds CsrA and prevents it from repressing translation of its target genes, one of which is flagellin. Binds to flagellin and participates in the assembly of the flagellum. This is Flagellar assembly factor FliW 2 from Helicobacter hepaticus (strain ATCC 51449 / 3B1).